The chain runs to 526 residues: Light-independent protochlorophyllide reductase subunit B (526 aa).

A [4Fe-4S] cluster-binding site is contributed by Asp36. The Proton donor role is filled by Asp290. Residue 425–426 participates in substrate binding; sequence GL.

The protein belongs to the ChlB/BchB/BchZ family. As to quaternary structure, protochlorophyllide reductase is composed of three subunits; ChlL, ChlN and ChlB. Forms a heterotetramer of two ChlB and two ChlN subunits. The cofactor is [4Fe-4S] cluster.

It catalyses the reaction chlorophyllide a + oxidized 2[4Fe-4S]-[ferredoxin] + 2 ADP + 2 phosphate = protochlorophyllide a + reduced 2[4Fe-4S]-[ferredoxin] + 2 ATP + 2 H2O. The protein operates within porphyrin-containing compound metabolism; chlorophyll biosynthesis (light-independent). Its function is as follows. Component of the dark-operative protochlorophyllide reductase (DPOR) that uses Mg-ATP and reduced ferredoxin to reduce ring D of protochlorophyllide (Pchlide) to form chlorophyllide a (Chlide). This reaction is light-independent. The NB-protein (ChlN-ChlB) is the catalytic component of the complex. The chain is Light-independent protochlorophyllide reductase subunit B from Prochlorococcus marinus subsp. pastoris (strain CCMP1986 / NIES-2087 / MED4).